A 102-amino-acid chain; its full sequence is Small ribosomal subunit protein uS14 (102 aa).

This sequence belongs to the universal ribosomal protein uS14 family. In terms of assembly, part of the 30S ribosomal subunit. Contacts proteins S3 and S10.

Binds 16S rRNA, required for the assembly of 30S particles and may also be responsible for determining the conformation of the 16S rRNA at the A site. This is Small ribosomal subunit protein uS14 from Wolbachia pipientis wMel.